We begin with the raw amino-acid sequence, 150 residues long: Actin-depolymerizing factor 3 (150 aa).

Positions 7-150 (GVAVSEECKA…TLDVLKDHTS (144 aa)) constitute an ADF-H domain.

It belongs to the actin-binding proteins ADF family.

Actin-depolymerizing protein. Severs actin filaments (F-actin) and binds to actin monomers. The protein is Actin-depolymerizing factor 3 (ADF3) of Oryza sativa subsp. japonica (Rice).